Here is a 345-residue protein sequence, read N- to C-terminus: Probable 3'(2'),5'-bisphosphate nucleotidase 4 (345 aa).

Residue aspartate 46 is the Proton acceptor of the active site. The Mg(2+) site is built by glutamate 71, aspartate 134, valine 136, and aspartate 137. Threonine 139 acts as the Proton acceptor in catalysis. Positions 139, 247, 250, and 264 each coordinate adenosine 3',5'-bisphosphate. AMP-binding residues include serine 247, lysine 250, and arginine 264.

The protein belongs to the inositol monophosphatase superfamily. The cofactor is Mg(2+).

It carries out the reaction 3'-phosphoadenylyl sulfate + H2O = adenosine 5'-phosphosulfate + phosphate. The catalysed reaction is adenosine 3',5'-bisphosphate + H2O = AMP + phosphate. The enzyme catalyses adenosine 2',5'-bisphosphate + H2O = AMP + phosphate. It catalyses the reaction 1D-myo-inositol 1,4-bisphosphate + H2O = 1D-myo-inositol 4-phosphate + phosphate. It carries out the reaction 1D-myo-inositol 1,3,4-trisphosphate + H2O = 1D-myo-inositol 3,4-bisphosphate + phosphate. It functions in the pathway signal transduction; phosphatidylinositol signaling pathway. Phosphatase that converts adenosine 3'-phosphate 5'-phosphosulfate (PAPS) to adenosine 5'-phosphosulfate (APS) and 3'(2')-phosphoadenosine 5'-phosphate (PAP) to AMP. Is also able to hydrolyze inositol 1,4-bisphosphate and inositol 1,3,4-trisphosphate. This is Probable 3'(2'),5'-bisphosphate nucleotidase 4 (SAL4) from Arabidopsis thaliana (Mouse-ear cress).